Consider the following 364-residue polypeptide: Oxidized polyvinyl alcohol hydrolase (364 aa).

An N-terminal signal peptide occupies residues 1–34 (MFKPVVKSRSSRSFCYLAGCLAMVAATLSSTAQA). Active-site charge relay system residues include Ser-190 and Ser-293.

This sequence belongs to the peptidase S9A family. In terms of assembly, monomer.

It localises to the periplasm. It carries out the reaction nonane-4,6-dione + H2O = pentan-2-one + butanoate + H(+). Functionally, catalyzes the hydrolysis of 4,6-nonanedione, a beta-diketone compound. Also mediates hydrolysis of oxidized polyvinyl alcohol (PVA) in the second step in the degradation of polyvinyl alcohol. Not active toward the monoketone structure. The sequence is that of Oxidized polyvinyl alcohol hydrolase (oph) from Sphingopyxis sp. (strain 113P3).